Reading from the N-terminus, the 606-residue chain is MLHTAIPCWQPFLGLAVVLLLMGSTIGCPARCECSAQNKSVSCHRRRLLAIPEGIPIETKILDLSKNRLKSINPEEFISYPLLEEIDLSDNIIANVEPGAFNNLFNLRSLRLKGNRLKLVPLGVFTGLSNLTKLDISENKIVILLDYMFQDLHNLKSLEVGDNDLVYISHRAFSGLLSLEQLTLEKCNLTAVPTEALSHLRSLIALHLKHLNINNMPVYAFKRLFHLKNLEIDYWPLLDLMPANSLYGLNLTSLSITNTNLSTVPFLAFKHLVYLTHLNLSYNPISTIEAGMFSDLIRLQELHIVGAQLRTIEPHSFQGLRFLRVLNVSQNLLETLEENVFSSPRALEVLSINNNPLACDCRLLWLLQRQPNLQFGGQQPMCAGPDTIRERSFKDFHSTALSFYFTCKKPKIREKKLQHLLVDEGQTVQLECNADGDPQPVISWVTPRRRFITTKSNGRATVLGDGTLEIRFAQDQDSGMYVCIASNAAGNDTFTASLTVKGFTSDRFLYANRTPMYMTDSNDTVSNGTNANTFSLDLKTILVSTAMGCFTFLGVVLFCFLLLFVWSRGKGKHKNSIDLEYVPRKNNGAVVEGEVAGPRRFNMKMI.

The first 27 residues, 1–27 (MLHTAIPCWQPFLGLAVVLLLMGSTIG), serve as a signal peptide directing secretion. Residues 28–57 (CPARCECSAQNKSVSCHRRRLLAIPEGIPI) form the LRRNT domain. The Extracellular segment spans residues 28–545 (CPARCECSAQ…LDLKTILVST (518 aa)). Asn-38 is a glycosylation site (N-linked (GlcNAc...) asparagine). 12 LRR repeats span residues 58–79 (ETKI…EFIS), 82–103 (LLEE…AFNN), 106–127 (NLRS…VFTG), 130–151 (NLTK…MFQD), 154–175 (NLKS…AFSG), 178–199 (SLEQ…ALSH), 202–223 (SLIA…AFKR), 226–247 (HLKN…NSLY), 250–271 (NLTS…AFKH), 274–295 (YLTH…MFSD), 298–319 (RLQE…SFQG), and 322–343 (FLRV…VFSS). N-linked (GlcNAc...) asparagine glycosylation is present at Asn-130. A glycan (N-linked (GlcNAc...) asparagine) is linked at Asn-188. N-linked (GlcNAc...) asparagine glycosylation is found at Asn-250, Asn-260, and Asn-279. Asn-327 carries N-linked (GlcNAc...) asparagine glycosylation. The LRRCT domain maps to 355 to 409 (NPLACDCRLLWLLQRQPNLQFGGQQPMCAGPDTIRERSFKDFHSTALSFYFTCKK). A disulfide bridge connects residues Cys-432 and Cys-483. N-linked (GlcNAc...) asparagine glycosylation is found at Asn-491, Asn-522, and Asn-527. The helical transmembrane segment at 546–566 (AMGCFTFLGVVLFCFLLLFVW) threads the bilayer. The Cytoplasmic segment spans residues 567–606 (SRGKGKHKNSIDLEYVPRKNNGAVVEGEVAGPRRFNMKMI).

The protein resides in the membrane. This is Leucine-rich repeat and immunoglobulin-like domain-containing nogo receptor-interacting protein 2 (Lingo2) from Mus musculus (Mouse).